A 296-amino-acid polypeptide reads, in one-letter code: N-acetylmuramic acid 6-phosphate etherase (296 aa).

The region spanning 54 to 217 (VTESFRKGGR…STTSMVGIGK (164 aa)) is the SIS domain. The Proton donor role is filled by Glu-82. Residue Glu-113 is part of the active site.

It belongs to the GCKR-like family. MurNAc-6-P etherase subfamily. In terms of assembly, homodimer.

It carries out the reaction N-acetyl-D-muramate 6-phosphate + H2O = N-acetyl-D-glucosamine 6-phosphate + (R)-lactate. Its pathway is amino-sugar metabolism; N-acetylmuramate degradation. Its function is as follows. Specifically catalyzes the cleavage of the D-lactyl ether substituent of MurNAc 6-phosphate, producing GlcNAc 6-phosphate and D-lactate. This is N-acetylmuramic acid 6-phosphate etherase from Listeria welshimeri serovar 6b (strain ATCC 35897 / DSM 20650 / CCUG 15529 / CIP 8149 / NCTC 11857 / SLCC 5334 / V8).